The primary structure comprises 863 residues: Oleate activated transcription factor 3 (863 aa).

The zn(2)-C6 fungal-type DNA-binding region spans 18-47 (VCTNCKKRKSKCDRTKPCGTCVRLGDVDSC). The segment covering 52 to 63 (DSSGQPESSPSL) has biased composition (polar residues). The interval 52-99 (DSSGQPESSPSLNDADPLRKQSTPAERISPGFIKKRRSSQTRQDEDHW) is disordered.

It belongs to the OAF3 family.

It is found in the cytoplasm. It localises to the nucleus. The protein resides in the mitochondrion. Transcriptional inhibitor with a significantly increased number of target genes in response to oleate. The sequence is that of Oleate activated transcription factor 3 (OAF3) from Saccharomyces cerevisiae (strain ATCC 204508 / S288c) (Baker's yeast).